The primary structure comprises 352 residues: NAD(+)-dependent homoserine dehydrogenase (352 aa).

The protein belongs to the homoserine dehydrogenase family.

The enzyme catalyses L-homoserine + NAD(+) = L-aspartate 4-semialdehyde + NADH + H(+). Dehydrogenase involved in the degradation of canavanine, the delta-oxa-analog of arginine, allowing growth on canavanine as sole nitrogen and carbon source. Catalyzes the conversion of homoserine and NAD(+) to aspartate-semialdehyde and NADH. Is highly specific for NAD(+) and cannot use NADP(+). This is NAD(+)-dependent homoserine dehydrogenase from Pseudomonas canavaninivorans.